The primary structure comprises 96 residues: uncharacterized protein (96 aa).

One can recognise a CBS domain in the interval 57 to 96; the sequence is MTKKVRTTKKDASISDAAALMDKHNVNRLPVVDENNKLVL.

This is an uncharacterized protein from Methanobacterium ivanovii.